The following is a 564-amino-acid chain: Septation ring formation regulator EzrA (564 aa).

Topologically, residues 1-4 are extracellular; that stretch reads MVLY. Residues 5-23 traverse the membrane as a helical segment; it reads IILAIIVIILIAVGVLFYL. Topologically, residues 24 to 564 are cytoplasmic; the sequence is RSNKRQIIEK…KHIEEEVIKQ (541 aa). 5 coiled-coil regions span residues 99-138, 190-223, 271-300, 350-435, and 471-550; these read SFNA…YKDN, DGNY…LIRE, LISR…LIEH, VRQF…RRLL, and VKQL…ESVE.

This sequence belongs to the EzrA family.

The protein localises to the cell membrane. Functionally, negative regulator of FtsZ ring formation; modulates the frequency and position of FtsZ ring formation. Inhibits FtsZ ring formation at polar sites. Interacts either with FtsZ or with one of its binding partners to promote depolymerization. The sequence is that of Septation ring formation regulator EzrA from Staphylococcus aureus (strain JH1).